Reading from the N-terminus, the 319-residue chain is Cell surface A33 antigen (319 aa).

Positions 1–21 are cleaved as a signal peptide; sequence MVGKMWPVLWTLCAVRVTVDA. The region spanning 22–134 is the Ig-like V-type domain; sequence ISVETPQDVL…LEGNTKSRVR (113 aa). The Extracellular portion of the chain corresponds to 22–235; it reads ISVETPQDVL…VAVRSPSMNV (214 aa). 3 cysteine pairs are disulfide-bonded: C43–C117, C146–C222, and C162–C211. Residues N112, N200, and N223 are each glycosylated (N-linked (GlcNAc...) asparagine). Positions 140–227 constitute an Ig-like C2-type domain; sequence PPSKPECGIE…GTQFCNITVA (88 aa). A helical membrane pass occupies residues 236 to 256; it reads ALYVGIAVGVVAALIIIGIII. Residues 257-319 lie on the Cytoplasmic side of the membrane; sequence YCCCCRGKDD…GRESPDHLDQ (63 aa). Basic and acidic residues-rich tracts occupy residues 267–295 and 303–319; these read NTEDKEDARPNREAYEEPPEQLRELSRER and QEEQRSTGRESPDHLDQ. The segment at 267 to 319 is disordered; it reads NTEDKEDARPNREAYEEPPEQLRELSREREEEDDYRQEEQRSTGRESPDHLDQ.

N-glycosylated, contains approximately 8 kDa of N-linked carbohydrate. In terms of processing, palmitoylated. As to expression, expressed in normal gastrointestinal epithelium and in 95% of colon cancers.

The protein resides in the membrane. In terms of biological role, may play a role in cell-cell recognition and signaling. The protein is Cell surface A33 antigen (GPA33) of Homo sapiens (Human).